Reading from the N-terminus, the 355-residue chain is MSELKNDRYLRALLRQPVDVTPVWMMRQAGRYLPEYKATRAVAGDFMSLCKNAELACEVTLQPLRRYALDAAILFSDILTIPDAMGLGLYFETGEGPRFSSPVTCRADVEKLPIPDPEQELGYVMNAVRTIRKNLNGEVPLIGFSGSPWTLATYMVEGGSSKAFTKLKKMMYAEPQTLHLMLDKLADSVTLYLNAQIRAGAQSVMIFDTWGGVLTGRDYLEFSLNYMHKIVDGLLRENDGRRVPVTLFTKGGGQWLEAMAATGCDALGLDWTTDLADARRRVGDRVALQGNMDPSMLYASPARIEQEVAGILEGYGHGNGHVFNLGHGIHQDVPPEHAGAFVEAVHRLSRPYHLG.

Substrate is bound by residues 27-31 (RQAGR), Asp-77, Tyr-154, Thr-209, and His-327.

This sequence belongs to the uroporphyrinogen decarboxylase family. As to quaternary structure, homodimer.

It is found in the cytoplasm. It carries out the reaction uroporphyrinogen III + 4 H(+) = coproporphyrinogen III + 4 CO2. Its pathway is porphyrin-containing compound metabolism; protoporphyrin-IX biosynthesis; coproporphyrinogen-III from 5-aminolevulinate: step 4/4. Functionally, catalyzes the decarboxylation of four acetate groups of uroporphyrinogen-III to yield coproporphyrinogen-III. This is Uroporphyrinogen decarboxylase from Erwinia tasmaniensis (strain DSM 17950 / CFBP 7177 / CIP 109463 / NCPPB 4357 / Et1/99).